Consider the following 225-residue polypeptide: Ribose-5-phosphate isomerase A (225 aa).

Residues 32–35, 85–88, and 98–101 each bind substrate; these read TGST, DGAD, and KGGG. Catalysis depends on E107, which acts as the Proton acceptor. K125 lines the substrate pocket.

The protein belongs to the ribose 5-phosphate isomerase family. Homodimer.

The catalysed reaction is aldehydo-D-ribose 5-phosphate = D-ribulose 5-phosphate. It functions in the pathway carbohydrate degradation; pentose phosphate pathway; D-ribose 5-phosphate from D-ribulose 5-phosphate (non-oxidative stage): step 1/1. Functionally, catalyzes the reversible conversion of ribose-5-phosphate to ribulose 5-phosphate. The chain is Ribose-5-phosphate isomerase A from Hahella chejuensis (strain KCTC 2396).